Reading from the N-terminus, the 128-residue chain is Gastrotropin (128 aa).

A2 is modified (N-acetylalanine).

The protein belongs to the calycin superfamily. Fatty-acid binding protein (FABP) family. Expressed in ileum.

It localises to the cytoplasm. The protein resides in the membrane. In terms of biological role, binds to bile acids and is involved in enterohepatic bile acid metabolism. Required for efficient apical to basolateral transport of conjugated bile acids in ileal enterocytes. Stimulates gastric acid and pepsinogen secretion. The chain is Gastrotropin (FABP6) from Oryctolagus cuniculus (Rabbit).